Reading from the N-terminus, the 423-residue chain is Progestin and adipoQ receptor-like protein 1 (423 aa).

The Cytoplasmic segment spans residues 1 to 201; the sequence is MDPDEVNQAL…KSIWSLHTET (201 aa). A disordered region spans residues 54–140; that stretch reads VVSPTNSDDE…DEDELEVDVK (87 aa). The segment covering 60–69 has biased composition (acidic residues); sequence SDDEEGEFCS. A compositionally biased stretch (basic residues) spans 104 to 114; it reads TVLRYRRKKGG. The chain crosses the membrane as a helical span at residues 202-222; sequence GNIWTHLIGCVAFFLLACWFL. Over 223-234 the chain is Extracellular; that stretch reads TRPDNHIQFQEK. A helical transmembrane segment spans residues 235 to 252; the sequence is VVFSFFFAGAVSVSDSRS. Residues 253–288 lie on the Cytoplasmic side of the membrane; that stretch reads PSTPSRVIRSTSSRYSANSTIWESRCSLSARLFQPK. The helical transmembrane segment at 289–309 threads the bilayer; it reads ITYIAMVCVLGIGAIVVSLWD. Over 310-320 the chain is Extracellular; it reads KFSESKYRPVR. Residues 321-341 form a helical membrane-spanning segment; the sequence is AAVFVGMGCSGVIPTIHYIIT. The Cytoplasmic portion of the chain corresponds to 342-351; the sequence is DGVHSLFADN. The chain crosses the membrane as a helical span at residues 352-372; it reads SFHWLLLMAFLYLLGAALYAT. The Extracellular portion of the chain corresponds to 373-392; sequence RTPERFFPGKCDIWFQSHQL. Residues 393–413 form a helical membrane-spanning segment; the sequence is FHTCVVIAAFVHYYGISEMAF. Residues 414 to 423 lie on the Cytoplasmic side of the membrane; the sequence is ARLNEQCPVR.

It belongs to the ADIPOR family.

Its subcellular location is the membrane. In terms of biological role, probable receptor, which may be involved in metabolic pathways that regulate lipid metabolism such as fatty acid oxidation. The chain is Progestin and adipoQ receptor-like protein 1 from Caenorhabditis briggsae.